Consider the following 2506-residue polypeptide: Zinc finger protein 462 (2506 aa).

3 C2H2-type zinc fingers span residues 4-27 (LQCD…QDVH), 108-131 (FQCK…RKVH), and 162-185 (FSCQ…KMYH). Lys20 participates in a covalent cross-link: Glycyl lysine isopeptide (Lys-Gly) (interchain with G-Cter in SUMO1); alternate. Lys20 participates in a covalent cross-link: Glycyl lysine isopeptide (Lys-Gly) (interchain with G-Cter in SUMO2); alternate. The interval 215-241 (PCKELPAEVVERSILESMVKPLTKSRG) is interaction with PBX1. Residues Lys234 and Lys271 each participate in a glycyl lysine isopeptide (Lys-Gly) (interchain with G-Cter in SUMO2) cross-link. The interval 280-299 (QEGTNLPDVPNKSAPSPTSN) is disordered. O-linked (GlcNAc6P) serine glycosylation is found at Ser292 and Ser309. Residues Lys337, Lys347, and Lys349 each participate in a glycyl lysine isopeptide (Lys-Gly) (interchain with G-Cter in SUMO2) cross-link. A disordered region spans residues 337-356 (KFSPMSYPQMKPKSPHNSGL). 2 positions are modified to phosphoserine: Ser350 and Ser354. A Glycyl lysine isopeptide (Lys-Gly) (interchain with G-Cter in SUMO2) cross-link involves residue Lys428. C2H2-type zinc fingers lie at residues 439–462 (FQCP…ENIH) and 470–492 (YKCD…KQCH). Lys484 is covalently cross-linked (Glycyl lysine isopeptide (Lys-Gly) (interchain with G-Cter in SUMO2)). Residues 535 to 596 (DPLQQQQPPQ…QPQPPTQAAP (62 aa)) are disordered. Over residues 542–593 (PPQPPPPPPPPPPSQPQPLQQPQPPQLQPPHQVPPQPQTQPPPTQQPQPPTQ) the composition is skewed to pro residues. The segment at 600–623 (YKCTMCNYSTTTLKGLRVHQQHKH) adopts a C2H2-type 6 zinc-finger fold. Glycyl lysine isopeptide (Lys-Gly) (interchain with G-Cter in SUMO2) cross-links involve residues Lys631, Lys657, and Lys668. The segment at 636 to 661 (PSSLPLENETDSHPSSSNTVKKSQTS) is disordered. The segment covering 648–661 (HPSSSNTVKKSQTS) has biased composition (polar residues). Phosphoserine is present on Ser688. Glycyl lysine isopeptide (Lys-Gly) (interchain with G-Cter in SUMO2) cross-links involve residues Lys706 and Asp849. 3 C2H2-type zinc fingers span residues 843–866 (YYCK…QRMH), 886–908 (YRCL…YGEH), and 925–948 (YRCR…QRMH). A Glycyl lysine isopeptide (Lys-Gly) (interchain with G-Cter in SUMO2) cross-link involves residue Lys986. The C2H2-type 10 zinc-finger motif lies at 1030–1053 (YDCDVCSFASPNMHSVLVHYQKKH). Ser1090 carries the post-translational modification Phosphoserine. A Glycyl lysine isopeptide (Lys-Gly) (interchain with G-Cter in SUMO2) cross-link involves residue Lys1135. A disordered region spans residues 1157–1186 (MRGVEGPQGSPRPPAPIQQLNRSSSERDGP). A Phosphoserine modification is found at Ser1166. Residues Lys1206, Lys1214, Lys1220, and Lys1243 each participate in a glycyl lysine isopeptide (Lys-Gly) (interchain with G-Cter in SUMO2) cross-link. 2 C2H2-type zinc fingers span residues 1265–1288 (LKCR…KKDH) and 1470–1493 (YQCT…GKKH). Residue Lys1499 forms a Glycyl lysine isopeptide (Lys-Gly) (interchain with G-Cter in SUMO2) linkage. The C2H2-type 13 zinc finger occupies 1515–1538 (YKCRHCPYINTRIHGVLTHYQKRH). Glycyl lysine isopeptide (Lys-Gly) (interchain with G-Cter in SUMO2) cross-links involve residues Lys1571 and Lys1591. 3 C2H2-type zinc fingers span residues 1577-1600 (YRCK…EKYH), 1660-1683 (FRCQ…RIKH), and 1697-1720 (FKCA…QKRH). Glycyl lysine isopeptide (Lys-Gly) (interchain with G-Cter in SUMO2) cross-links involve residues Lys1698 and Lys1780. A C2H2-type 17 zinc finger spans residues 1892–1914 (YQCKHCDSKLQSTAELTSHLNIH). Lys1946 is covalently cross-linked (Glycyl lysine isopeptide (Lys-Gly) (interchain with G-Cter in SUMO2)). The C2H2-type 18; degenerate zinc-finger motif lies at 1968–1992 (YKCKFCVEVHPTLRAICNHLRKHVQ). Lys2004 bears the N6-methyllysine mark. 3 consecutive C2H2-type zinc fingers follow at residues 2025–2048 (YSCQ…QTHH), 2054–2077 (FRCK…LKAH), and 2083–2106 (YKCS…LKVH). A Glycyl lysine isopeptide (Lys-Gly) (interchain with G-Cter in SUMO2) cross-link involves residue Lys2104. The segment at 2122 to 2152 (SSHSHHSSQKATPAEEVEDSNDSSYSEPPDV) is disordered. The segment covering 2143–2152 (DSSYSEPPDV) has biased composition (polar residues). Phosphoserine is present on residues Ser2172 and Ser2177. 3 C2H2-type zinc fingers span residues 2191–2214 (LHCE…RDKH), 2220–2243 (FKCK…EAGH), and 2254–2276 (LRCP…IVLH). A Glycyl lysine isopeptide (Lys-Gly) (interchain with G-Cter in SUMO2) cross-link involves residue Lys2293. C2H2-type zinc fingers lie at residues 2300–2322 (FRCD…IEKH) and 2328–2351 (YKCQ…RDEH). Positions 2371–2396 (MKEKMESSSSDDEDKEEEMNSKAEDR) are disordered. A C2H2-type 27 zinc finger spans residues 2414–2436 (FPCEFCGRAFSQGSEWERHVLRH). Residues Lys2444 and Lys2504 each participate in a glycyl lysine isopeptide (Lys-Gly) (interchain with G-Cter in SUMO2) cross-link.

As to quaternary structure, interacts with PBX1; this interaction prevents PBX1-HOXA9 heterodimer from forming and binding to DNA. O-GlcNAcylated with O-GlcNAc-6-phosphate.

It is found in the nucleus. Zinc finger nuclear factor involved in transcription by regulating chromatin structure and organization. Involved in the pluripotency and differentiation of embryonic stem cells by regulating SOX2, POU5F1/OCT4, and NANOG. By binding PBX1, prevents the heterodimerization of PBX1 and HOXA9 and their binding to DNA. Regulates neuronal development and neural cell differentiation. This chain is Zinc finger protein 462, found in Homo sapiens (Human).